The primary structure comprises 440 residues: Proton extrusion protein PxcA (440 aa).

A run of 4 helical transmembrane segments spans residues 222 to 242 (FVLT…TFFL), 316 to 336 (NAIA…LVLV), 352 to 374 (IVYG…MFVG), and 400 to 420 (FNFL…KYWI).

The protein belongs to the CemA family.

It is found in the cell inner membrane. Functionally, required for H(+) efflux immediately after light irradiation to form a rapid H(+) concentration gradient across the thylakoid membranes. Together with PxcL, contributes to transient H(+) uptake following dark to light transition. Involved in light-induced Na(+)-dependent proton extrusion. Also seems to be involved in CO(2) transport. The sequence is that of Proton extrusion protein PxcA from Synechocystis sp. (strain ATCC 27184 / PCC 6803 / Kazusa).